The following is an 858-amino-acid chain: Leucine--tRNA ligase (858 aa).

The 'HIGH' region motif lies at 42 to 52; that stretch reads PYPSGRLHMGH. A 'KMSKS' region motif is present at residues 618–622; the sequence is KMSKS. Lys-621 is a binding site for ATP.

It belongs to the class-I aminoacyl-tRNA synthetase family.

The protein localises to the cytoplasm. The enzyme catalyses tRNA(Leu) + L-leucine + ATP = L-leucyl-tRNA(Leu) + AMP + diphosphate. The chain is Leucine--tRNA ligase from Vibrio atlanticus (strain LGP32) (Vibrio splendidus (strain Mel32)).